The chain runs to 257 residues: Hydroxyacylglutathione hydrolase (257 aa).

7 residues coordinate Zn(2+): histidine 54, histidine 56, aspartate 58, histidine 59, histidine 109, aspartate 129, and histidine 167.

It belongs to the metallo-beta-lactamase superfamily. Glyoxalase II family. As to quaternary structure, monomer. It depends on Zn(2+) as a cofactor.

It carries out the reaction an S-(2-hydroxyacyl)glutathione + H2O = a 2-hydroxy carboxylate + glutathione + H(+). The protein operates within secondary metabolite metabolism; methylglyoxal degradation; (R)-lactate from methylglyoxal: step 2/2. Its function is as follows. Thiolesterase that catalyzes the hydrolysis of S-D-lactoyl-glutathione to form glutathione and D-lactic acid. This chain is Hydroxyacylglutathione hydrolase, found in Marinomonas sp. (strain MWYL1).